The sequence spans 148 residues: SPbeta prophage-derived uncharacterized protein YomK (148 aa).

The next 2 membrane-spanning stretches (helical) occupy residues 72 to 92 (WGIG…LFGV) and 104 to 124 (NALI…RNII).

It is found in the cell membrane. This chain is SPbeta prophage-derived uncharacterized protein YomK (yomK), found in Bacillus subtilis (strain 168).